Reading from the N-terminus, the 221-residue chain is Lactate racemization regulatory protein (221 aa).

The HTH crp-type domain maps to 139–213 (NGKKGAICAF…NHKFIIQDVS (75 aa)). Residues 172–192 (NDDIAGFCGISSRSSVNRMLK) constitute a DNA-binding region (H-T-H motif).

As to quaternary structure, multimerizes on DNA. Multimerization is required for transcription activation.

With respect to regulation, L-lactate acts as a positive effector on the binding and multimerization of LarR on DNA, while D-lactate antagonizes the positive effect of L-lactate. Its function is as follows. Positive transcriptional regulator that is absolutely required for the expression of lactate racemase (Lar) activity. Controls Lar expression by sensing the L-/D-lactate ration. Binds to a 16-bp palindromic sequence (Lar box motif) that is present in the larR-larA intergenic region, allowing transcription of the larABCDE operon. The protein is Lactate racemization regulatory protein of Lactiplantibacillus plantarum (strain ATCC BAA-793 / NCIMB 8826 / WCFS1) (Lactobacillus plantarum).